Here is a 506-residue protein sequence, read N- to C-terminus: Maturase K (506 aa).

The protein belongs to the intron maturase 2 family. MatK subfamily.

The protein localises to the plastid. It is found in the chloroplast. In terms of biological role, usually encoded in the trnK tRNA gene intron. Probably assists in splicing its own and other chloroplast group II introns. This chain is Maturase K, found in Lathyrus tingitanus (Tangier pea).